We begin with the raw amino-acid sequence, 184 residues long: ATP synthase subunit b, chloroplastic (184 aa).

Residues 27-49 (LATNPINLSIVIGVLIFFGKGVL) form a helical membrane-spanning segment.

It belongs to the ATPase B chain family. F-type ATPases have 2 components, F(1) - the catalytic core - and F(0) - the membrane proton channel. F(1) has five subunits: alpha(3), beta(3), gamma(1), delta(1), epsilon(1). F(0) has four main subunits: a(1), b(1), b'(1) and c(10-14). The alpha and beta chains form an alternating ring which encloses part of the gamma chain. F(1) is attached to F(0) by a central stalk formed by the gamma and epsilon chains, while a peripheral stalk is formed by the delta, b and b' chains.

It localises to the plastid. It is found in the chloroplast thylakoid membrane. In terms of biological role, f(1)F(0) ATP synthase produces ATP from ADP in the presence of a proton or sodium gradient. F-type ATPases consist of two structural domains, F(1) containing the extramembraneous catalytic core and F(0) containing the membrane proton channel, linked together by a central stalk and a peripheral stalk. During catalysis, ATP synthesis in the catalytic domain of F(1) is coupled via a rotary mechanism of the central stalk subunits to proton translocation. Its function is as follows. Component of the F(0) channel, it forms part of the peripheral stalk, linking F(1) to F(0). The protein is ATP synthase subunit b, chloroplastic of Lotus japonicus (Lotus corniculatus var. japonicus).